We begin with the raw amino-acid sequence, 370 residues long: Phenylalanine dehydrogenase (370 aa).

Arginine 44 contacts NAD(+). Lysine 68 lines the L-phenylalanine pocket. Lysine 80 acts as the Proton donor/acceptor in catalysis. Residue 114 to 115 participates in L-phenylalanine binding; that stretch reads TD. Residues aspartate 115, serine 146, threonine 150, 180–186, 203–204, 243–244, and 264–266 contribute to the NAD(+) site; these read GLGKVGF, DV, AI, and AAN. Asparagine 266 is an L-phenylalanine binding site.

Belongs to the Glu/Leu/Phe/Val dehydrogenases family.

It catalyses the reaction L-phenylalanine + NAD(+) + H2O = 3-phenylpyruvate + NH4(+) + NADH + H(+). It functions in the pathway amino-acid biosynthesis; L-phenylalanine biosynthesis; L-phenylalanine from phenylpyruvate (PDH route): step 1/1. Catalyzes the reversible NAD(+)-dependent oxidative deamination of L-phenylalanine to phenylpyruvate. The protein is Phenylalanine dehydrogenase of Caldalkalibacillus thermarum (strain TA2.A1).